The following is a 367-amino-acid chain: Glutamate 5-kinase (367 aa).

Residue Lys-10 participates in ATP binding. 3 residues coordinate substrate: Ser-50, Asp-137, and Asn-149. Residues 169–170 (TD) and 211–217 (TGGMSTK) each bind ATP. A PUA domain is found at 275-353 (AGIITIDAGA…QDIEQVLGYE (79 aa)).

Belongs to the glutamate 5-kinase family.

Its subcellular location is the cytoplasm. It carries out the reaction L-glutamate + ATP = L-glutamyl 5-phosphate + ADP. It functions in the pathway amino-acid biosynthesis; L-proline biosynthesis; L-glutamate 5-semialdehyde from L-glutamate: step 1/2. Its function is as follows. Catalyzes the transfer of a phosphate group to glutamate to form L-glutamate 5-phosphate. This is Glutamate 5-kinase from Pasteurella multocida (strain Pm70).